Reading from the N-terminus, the 635-residue chain is Threonine--tRNA ligase (635 aa).

In terms of domain architecture, TGS spans 1 to 61 (MISIRLKDGS…KEDGCLELLD (61 aa)). A catalytic region spans residues 242–532 (DHRRLGRELG…LTEHFGGAFP (291 aa)). Zn(2+)-binding residues include C333, H384, and H509.

Belongs to the class-II aminoacyl-tRNA synthetase family. Homodimer. It depends on Zn(2+) as a cofactor.

Its subcellular location is the cytoplasm. The catalysed reaction is tRNA(Thr) + L-threonine + ATP = L-threonyl-tRNA(Thr) + AMP + diphosphate + H(+). Catalyzes the attachment of threonine to tRNA(Thr) in a two-step reaction: L-threonine is first activated by ATP to form Thr-AMP and then transferred to the acceptor end of tRNA(Thr). Also edits incorrectly charged L-seryl-tRNA(Thr). In Syntrophomonas wolfei subsp. wolfei (strain DSM 2245B / Goettingen), this protein is Threonine--tRNA ligase.